Reading from the N-terminus, the 235-residue chain is Peroxisomal membrane protein 11C (235 aa).

Over 1–91 (MSTLETTRAE…LPLVLLGKSK (91 aa)) the chain is Cytoplasmic. A helical membrane pass occupies residues 92–108 (NALLSTFLFLDQIVWLG). Over 109–206 (RTGIYKDKER…LLQLAPKKVT (98 aa)) the chain is Lumenal. The chain crosses the membrane as a helical span at residues 207–226 (PRVTGAFGFASSLISCYQLL). Topologically, residues 227 to 235 (PSHPKSKMV) are cytoplasmic.

It belongs to the peroxin-11 family. As to quaternary structure, homooligomer. Interacts with ARC5 and FIS1B on peroxisomes. As to expression, expressed in roots and developing siliques.

Its subcellular location is the peroxisome membrane. In terms of biological role, involved in peroxisomal proliferation. Promotes peroxisomal duplication, aggregation or elongation without fission. The chain is Peroxisomal membrane protein 11C (PEX11C) from Arabidopsis thaliana (Mouse-ear cress).